Reading from the N-terminus, the 509-residue chain is MAYLIDIPFEYFSSFLGVHPDQLKLLFCFLSAYPFAGILKRLPSAPWIRNLFSISIGLFYLIGVHHLYDGVLVLLFDALFTYFVAAFYRSSRMPWIIFIVILGHTFSSHVIRYIYPSENTDITASQMVLCMKLTAFAWSVYDGRLPSSELSSYQKDRALRKIPNILYFLGYVFFFPSLLVGPAFDYVDYERFITLSMFKPLADPYEKQITPHSLEPALGRCWRGLLWLILFITGSSIYPLKFLLTPKFASSPILLKYGYVCITAFVARMKYYGAWELSDGACILSGIGYNGLDSSKHPRWDRVKNIDPIKFEFADNIKCALEAWNMNTNKWLRNYVYLRVAKKGKRPGFKSTLSTFTVSAMWHGVSAGYYLTFVSAAFIQTVAKYTRRHVRPFFLKPDMETPGPFKRVYDVIGMVATNLSLSYLIISFLLLNLKESIHVWKELYFIVHIYILIALAVFNSPIRSKLDNKIRSRVNSYKLKSYEQSMKSTSDTDMLNMSVPKREDFENDE.

Topologically, residues 1–14 are lumenal; it reads MAYLIDIPFEYFSS. A helical membrane pass occupies residues 15–35; it reads FLGVHPDQLKLLFCFLSAYPF. At 36–55 the chain is on the cytoplasmic side; that stretch reads AGILKRLPSAPWIRNLFSIS. A helical transmembrane segment spans residues 56 to 76; that stretch reads IGLFYLIGVHHLYDGVLVLLF. Residues 77–94 are Lumenal-facing; it reads DALFTYFVAAFYRSSRMP. A helical membrane pass occupies residues 95 to 115; sequence WIIFIVILGHTFSSHVIRYIY. The Cytoplasmic segment spans residues 116 to 223; sequence PSENTDITAS…LEPALGRCWR (108 aa). A helical membrane pass occupies residues 224–244; the sequence is GLLWLILFITGSSIYPLKFLL. The Lumenal portion of the chain corresponds to 245 to 246; it reads TP. A helical transmembrane segment spans residues 247 to 267; the sequence is KFASSPILLKYGYVCITAFVA. Residues 268 to 410 lie on the Cytoplasmic side of the membrane; the sequence is RMKYYGAWEL…TPGPFKRVYD (143 aa). Residue H363 is part of the active site. Residues 411 to 431 traverse the membrane as a helical segment; it reads VIGMVATNLSLSYLIISFLLL. The Lumenal portion of the chain corresponds to 432-441; the sequence is NLKESIHVWK. A helical transmembrane segment spans residues 442 to 462; sequence ELYFIVHIYILIALAVFNSPI. Residues 463–509 are Cytoplasmic-facing; the sequence is RSKLDNKIRSRVNSYKLKSYEQSMKSTSDTDMLNMSVPKREDFENDE. A disordered region spans residues 488–509; that stretch reads STSDTDMLNMSVPKREDFENDE. S490 is modified (phosphoserine). Positions 500-509 are enriched in basic and acidic residues; the sequence is PKREDFENDE.

Belongs to the membrane-bound acyltransferase family.

The protein localises to the endoplasmic reticulum membrane. It localises to the microsome membrane. It catalyses the reaction a 1-acyl-sn-glycero-3-phosphate + an acyl-CoA = a 1,2-diacyl-sn-glycero-3-phosphate + CoA. The catalysed reaction is a 1-acyl-sn-glycero-3-phosphocholine + an acyl-CoA = a 1,2-diacyl-sn-glycero-3-phosphocholine + CoA. The enzyme catalyses a 1-acyl-sn-glycero-3-phosphoethanolamine + an acyl-CoA = a 1,2-diacyl-sn-glycero-3-phosphoethanolamine + CoA. Its function is as follows. Membrane-bound O-acyltransferase that mediates the incorporation of unsaturated acyl chains into the sn-2 position of phospholipids. This is Lysophospholipid acyltransferase (ale1) from Schizosaccharomyces pombe (strain 972 / ATCC 24843) (Fission yeast).